Consider the following 279-residue polypeptide: Protoheme IX farnesyltransferase (279 aa).

9 consecutive transmembrane segments (helical) span residues 1–21 (MIKPGIILGNIICLSGGFFLA), 29–49 (IFFLKTVFGLILIISSSCILN), 79–99 (ILFFFSIILLILGLLVFYIYI), 101–121 (FLCTIISFFGFFFYVYLYSYL), 128–148 (FSTFVGSVSGSLPPIIGYVAV), 156–176 (CTILFFMFSFWQIAHSYSIII), 200–220 (IIFISICILNLFFFNFLLYFF), 225–245 (FFYFLYTSFFIFLWFIFSFLS), and 254–274 (IWSRIMFFFSIFIIFMISFLM).

Belongs to the UbiA prenyltransferase family. Protoheme IX farnesyltransferase subfamily.

It is found in the cell membrane. The catalysed reaction is heme b + (2E,6E)-farnesyl diphosphate + H2O = Fe(II)-heme o + diphosphate. It functions in the pathway porphyrin-containing compound metabolism; heme O biosynthesis; heme O from protoheme: step 1/1. Converts heme B (protoheme IX) to heme O by substitution of the vinyl group on carbon 2 of heme B porphyrin ring with a hydroxyethyl farnesyl side group. The protein is Protoheme IX farnesyltransferase of Buchnera aphidicola subsp. Cinara cedri (strain Cc).